The chain runs to 382 residues: Chaperone protein DnaJ 1 (382 aa).

The region spanning 4–68 is the J domain; the sequence is DYYGILGVDR…DKRRIVDMGG (65 aa). A CR-type zinc finger spans residues 134–216; it reads GAKKDLTLDT…CAGDGRVRAR (83 aa). Cys147, Cys150, Cys164, Cys167, Cys190, Cys193, Cys204, and Cys207 together coordinate Zn(2+). 4 CXXCXGXG motif repeats span residues 147-154, 164-171, 190-197, and 204-211; these read CTKCHGSG, CGTCNGAG, CHTCDGTG, and CTECAGDG.

The protein belongs to the DnaJ family. Homodimer. The cofactor is Zn(2+).

It localises to the cytoplasm. In terms of biological role, participates actively in the response to hyperosmotic and heat shock by preventing the aggregation of stress-denatured proteins and by disaggregating proteins, also in an autonomous, DnaK-independent fashion. Unfolded proteins bind initially to DnaJ; upon interaction with the DnaJ-bound protein, DnaK hydrolyzes its bound ATP, resulting in the formation of a stable complex. GrpE releases ADP from DnaK; ATP binding to DnaK triggers the release of the substrate protein, thus completing the reaction cycle. Several rounds of ATP-dependent interactions between DnaJ, DnaK and GrpE are required for fully efficient folding. Also involved, together with DnaK and GrpE, in the DNA replication of plasmids through activation of initiation proteins. This is Chaperone protein DnaJ 1 from Corynebacterium glutamicum (strain ATCC 13032 / DSM 20300 / JCM 1318 / BCRC 11384 / CCUG 27702 / LMG 3730 / NBRC 12168 / NCIMB 10025 / NRRL B-2784 / 534).